Reading from the N-terminus, the 802-residue chain is Potassium channel AKT2/3 (802 aa).

At 1 to 79 the chain is on the cytoplasmic side; that stretch reads MDLKYSASHC…PMDSRYRCWE (79 aa). Residues 80–100 form a helical membrane-spanning segment; sequence FYMVLLVAYSAWVYPFEVAFL. The Extracellular portion of the chain corresponds to 101 to 109; the sequence is NSSPKRNLC. Residues 110–130 traverse the membrane as a helical segment; the sequence is IADNIVDLFFAVDIVLTFFVA. The Cytoplasmic portion of the chain corresponds to 131-153; that stretch reads YIDERTQLLVREPKQIAVRYLST. Residues 154 to 174 traverse the membrane as a helical segment; sequence WFLMDVASTIPFDAIGYLITG. At 175–183 the chain is on the extracellular side; it reads TSTLNITCN. N-linked (GlcNAc...) asparagine glycosylation occurs at Asn179. Residues 184-204 form a helical; Voltage-sensor membrane-spanning segment; it reads LLGLLRFWRLRRVKHLFTRLE. At 205 to 218 the chain is on the cytoplasmic side; the sequence is KDIRYSYFWIRCFR. Residues 219 to 239 traverse the membrane as a helical segment; the sequence is LLSVTLFLVHCAGCSYYLIAD. Over 240–265 the chain is Extracellular; it reads RYPHQGKTWTDAIPNFTETSLSIRYI. An N-linked (GlcNAc...) asparagine glycan is attached at Asn254. Residues 266 to 285 constitute an intramembrane region (pore-forming); it reads AAIYWSITTMTTVGYGDLHA. Residues 286–288 lie on the Extracellular side of the membrane; the sequence is SNT. Residues 289-309 traverse the membrane as a helical segment; it reads IEMVFITVYMLFNLGLTAYLI. The Cytoplasmic portion of the chain corresponds to 310–802; that stretch reads GNMTNLVVEG…KLYFVVNKII (493 aa). Position 394–513 (394–513) interacts with a nucleoside 3',5'-cyclic phosphate; it reads LFKGVSREIL…ATMLKNFLQH (120 aa). ANK repeat units follow at residues 540 to 569, 573 to 602, 606 to 636, 637 to 666, and 670 to 699; these read NIAS…SPDI, KGKT…NIHI, NGNS…SDPH, IAGD…NVDT, and HGVT…DVVC. Residues 725–802 form the KHA domain; that stretch reads RVSIYRGHPL…KLYFVVNKII (78 aa).

The protein belongs to the potassium channel family. Plant (TC 1.A.1.4) subfamily. In terms of assembly, the potassium channel is probably composed of a homo- or heterotetrameric complex of pore-forming subunits. Interacts with the phosphatase PPC2A and the kinase CIPK6. May interact with AKT1, KAT1 and KAT3. Interacts with SLAC1. Post-translationally, dephosphorylated by PP2CA. Expressed mainly in the phloem tissues throughout the plant but also, at a lower level, in leaf epiderm, mesophyll and guard cells.

It is found in the endoplasmic reticulum membrane. Highly selective and weak inward-rectifying potassium channel. Plays a role in both loading and unloading potassium into/from the phloem sap. Seems to control sugar loading into phloem via a voltage-dependent process. Blocked by physiological concentrations of external calcium and by external acidification. May interact with the cytoskeleton or with regulatory proteins. Dephosphorylation by PP2CA not only leads to the inhibition of potassium currents but also to an increase of the voltage-dependence of the channel. Regulated by the CBL4/CIPK6 calcium sensor/protein kinase complex via a kinase interaction-dependent but phosphorylation-independent translocation of the channel to the plasma membrane. This is Potassium channel AKT2/3 (AKT2) from Arabidopsis thaliana (Mouse-ear cress).